Here is a 152-residue protein sequence, read N- to C-terminus: Actin-depolymerizing factor 2, isoform c (152 aa).

Residues 4-147 (GVKVDPSCKN…DEKSVKSDLM (144 aa)) form the ADF-H domain.

It belongs to the actin-binding proteins ADF family.

Depolymerizes growing actin filaments in muscle cells; required for the assembly of actin filaments into the functional contractile myofilament lattice of muscle. This chain is Actin-depolymerizing factor 2, isoform c, found in Caenorhabditis elegans.